The chain runs to 232 residues: Orotidine 5'-phosphate decarboxylase (232 aa).

Substrate is bound by residues D11, K33, 60-69, T120, R181, Q190, G210, and R211; that span reads DLKFHDIPNT. Catalysis depends on K62, which acts as the Proton donor.

It belongs to the OMP decarboxylase family. Type 1 subfamily. Homodimer.

It carries out the reaction orotidine 5'-phosphate + H(+) = UMP + CO2. It participates in pyrimidine metabolism; UMP biosynthesis via de novo pathway; UMP from orotate: step 2/2. Its function is as follows. Catalyzes the decarboxylation of orotidine 5'-monophosphate (OMP) to uridine 5'-monophosphate (UMP). The protein is Orotidine 5'-phosphate decarboxylase of Vibrio vulnificus (strain CMCP6).